A 720-amino-acid polypeptide reads, in one-letter code: MENEDHNFGTSDWWPNQLDLEILDQNSQQVDPYGEDFDYAEAFEDLDLAAVKDDLEEMMTDSKDWWPADYGHYGPLFIRMAWHSAGTYRTFDGRGGAAGGRQRLPPVDSWPDNVNLDKARRLLWPIKQKYGRKLSWGDLIILAGNVALESMGFETYGFAGGRKDDYTPDEAVDWGPEDEWETTSGDRFDADGSLKWPLGNTVMGLIYVNPEGPNGEPDLEGSAKNIRESFGKMAMNDKETVALIAGGHTFGKVHGADDPEENVGAEPAAAPIEKQGLGWENEFGEGKGPDTITSGIEGPWNTTPTQWDMSYVDNLLEYEWEPEKGPGGAWQWTTKSGELNESAPGVQDPTDTEDVMMLTTDVALKDDPDYREVLETFQENPREFQQSFSKAWYKLIHRDMGPSERFLGPEVPEETMIWQDPLPDADYDLVDDEAVAALKSELLESELSIPQLVKTAWASASTYRDSDKRGGANGARIRLEPQRSWEVNEPEQLEAALSTYEDIQAEFNDARSDDMRVSLADLIVLGGNAAIEQAAADAGYDVDVPFEPGRTDATPEQTDVESFEALKPKADGFRNYLGDDAEREPEELLVDKAELLNLTADDMTVLVGGLRALGVTHGDSELGIFTDQPGTLTNDFFTTLLDMDYEWEAASEDREVFELRDRETGDVEWTGSRVDLLFGSNTRLRAIAEVYGSDADEELFVQDFVDTWSEVMKLDRFDLE.

The segment at residues 82-207 (WHSAGTYRTF…LGNTVMGLIY (126 aa)) is a cross-link (tryptophyl-tyrosyl-methioninium (Trp-Tyr) (with M-233)). Residue histidine 83 is the Proton acceptor of the active site. The tryptophyl-tyrosyl-methioninium (Tyr-Met) (with W-82) cross-link spans 207–233 (YVNPEGPNGEPDLEGSAKNIRESFGKM). Residue histidine 248 coordinates heme b.

It belongs to the peroxidase family. Peroxidase/catalase subfamily. Homodimer or homotetramer. It depends on heme b as a cofactor. Formation of the three residue Trp-Tyr-Met cross-link is important for the catalase, but not the peroxidase activity of the enzyme.

The enzyme catalyses H2O2 + AH2 = A + 2 H2O. The catalysed reaction is 2 H2O2 = O2 + 2 H2O. Functionally, bifunctional enzyme with both catalase and broad-spectrum peroxidase activity. The chain is Catalase-peroxidase from Halobacterium salinarum (strain ATCC 29341 / DSM 671 / R1).